Consider the following 575-residue polypeptide: Serine/threonine-protein kinase Pink1, mitochondrial (575 aa).

The transit peptide at 1–51 directs the protein to the mitochondrion; the sequence is MSLLAYTNLLLQNGRIFRYYKKANIKKFIKKIIKLDLKSTPSEASVSRQTF. The Mitochondrial intermembrane portion of the chain corresponds to 52-94; it reads LSTGLNSVKNAVQLQARKLLINNVLERVTPTLNSDLKKKAAKR. A helical membrane pass occupies residues 95–118; it reads LFYGDSAPFFALVGVSLASGSGLL. Topologically, residues 119–575 are cytoplasmic; sequence TKDDELEGIC…KWIQELHIYN (457 aa). Lys-193 contacts ATP. Ser-202 and Ser-204 each carry phosphoserine; by autocatalysis. Glu-214 lines the Mg(2+) pocket. A Phosphothreonine; by autocatalysis modification is found at Thr-305. Residue Asp-334 is the Proton acceptor of the active site. 2 residues coordinate Mg(2+): Asn-339 and Asp-357.

It belongs to the protein kinase superfamily. Ser/Thr protein kinase family. Mg(2+) serves as cofactor. In terms of processing, proteolytically cleaved. In healthy cells, the precursor is continuously imported into mitochondria where it is proteolytically cleaved into its short form by the mitochondrial rhomboid protease rho-7 (8231301). The short form is then released into the cytosol where it rapidly undergoes proteasome-dependent degradation. In unhealthy cells, when cellular stress conditions lead to the loss of mitochondrial membrane potential, mitochondrial import is impaired leading to the precursor accumulating on the outer mitochondrial membrane (OMM). Autophosphorylated. Autophosphorylated on Ser-202, which activates kinase activity. Loss of mitochondrial membrane potential results in the precursor accumulating on the outer mitochondrial membrane (OMM) where it is activated by autophosphorylation at Ser-202. Autophosphorylation is sufficient and essential for selective recruitment of park to depolarized mitochondria, likely via Pink1-dependent phosphorylation of polyubiquitin chains. Also autophosphorylated at Ser-204 and Thr-305.

The protein localises to the mitochondrion outer membrane. Its subcellular location is the mitochondrion inner membrane. The protein resides in the cytoplasm. It is found in the cytosol. The catalysed reaction is L-seryl-[protein] + ATP = O-phospho-L-seryl-[protein] + ADP + H(+). It carries out the reaction L-threonyl-[protein] + ATP = O-phospho-L-threonyl-[protein] + ADP + H(+). In terms of biological role, acts as a serine/threonine-protein kinase. Exhibits a substrate preference for proline at position P+1 and a general preference at several residues for basic residues such as arginine. Also exhibits moderate preferences for a phosphotyrosine at position P-3 and a tryptophan at P-5. Critical to mitochondrial homeostasis it mediates several pathways that maintain mitochondrial health and function Protects against mitochondrial dysfunction during cellular stress by phosphorylating mitochondrial proteins such as park and likely Drp1, to coordinate mitochondrial quality control mechanisms that remove and replace dysfunctional mitochondrial components. Depending on the severity of mitochondrial damage and/or dysfunction, activity ranges from preventing apoptosis and stimulating mitochondrial biogenesis to regulating mitochondrial dynamics and eliminating severely damaged mitochondria via mitophagy. Appears to be particularly important in maintaining the physiology and function of cells with high energy demands that are undergoing stress or altered metabolic environment, including spermatids, muscle cells and neurons such as the dopaminergic (DA) neurons. Mediates the translocation and activation of park at the outer membrane (OMM) of dysfunctional/depolarized mitochondria. At the OMM of damaged mitochondria, phosphorylates pre-existing polyubiquitin chains, the Pink1-phosphorylated polyubiquitin then recruits park from the cytosol to the OMM where park is fully activated by phosphorylation at 'Ser-94' by Pink1. When cellular stress results in irreversible mitochondrial damage, functions with park to promote the clearance of dysfunctional and/or depolarized mitochondria by selective autophagy (mitophagy). The Pink1-park pathway also promotes fission and/or inhibits fusion of damaged mitochondria, by phosphorylating and thus promoting the park-dependent degradation of proteins involved in mitochondrial fusion/fission such as Marf, Opa1 and fzo. This prevents the refusion of unhealthy mitochondria with the mitochondrial network or initiates mitochondrial fragmentation facilitating their later engulfment by autophagosomes. Also likely to promote mitochondrial fission independently of park and Atg7-mediated mitophagy, via the phosphorylation and activation of Drp1. Regulates motility of damaged mitochondria by phosphorylating Miro which likely promotes its park-dependent degradation by the proteasome; in motor neurons, this inhibits mitochondrial intracellular anterograde transport along the axons which probably increases the chance of the mitochondria being eliminated in the soma. The Pink1-park pathway is also involved in mitochondrial regeneration processes such as promoting mitochondrial biogenesis, activating localized mitochondrial repair, promoting selective turnover of mitochondrial proteins and initiating the mitochondrial import of endogenous proteins. Involved in mitochondrial biogenesis by promoting the park-dependent ubiquitination of transcriptional repressor Paris which leads to its subsequent proteasomal degradation and allows activation of the transcription factor srl. Functions with park to promote localized mitochondrial repair by activating the translation of specific nuclear-encoded mitochondrial RNAs (nc-mtRNAs) on the mitochondrial surface, including several key electron transport chain component nc-mtRNAs. During oogenesis, phosphorylates and inactivates larp on the membrane of defective mitochondria, thus impairing local translation and mtDNA replication and consequently, reducing transmission of deleterious mtDNA mutations to the mature oocyte. Phosphorylates the mitochondrial acyl-CoA dehydrogenase Mcad, and appears to be important for maintaining fatty acid and amino acid metabolism via a mechanism that is independent of it's role in maintaining production of ATP. The chain is Serine/threonine-protein kinase Pink1, mitochondrial from Pediculus humanus subsp. corporis (Body louse).